A 140-amino-acid chain; its full sequence is L-fucose mutarotase (140 aa).

The Proton donor role is filled by His-22. Substrate contacts are provided by residues Asp-30, Arg-107, and 129–131 (YGN).

Belongs to the RbsD / FucU family. FucU mutarotase subfamily. In terms of assembly, homodecamer.

It localises to the cytoplasm. It carries out the reaction alpha-L-fucose = beta-L-fucose. It functions in the pathway carbohydrate metabolism; L-fucose metabolism. Functionally, involved in the anomeric conversion of L-fucose. In Salmonella gallinarum (strain 287/91 / NCTC 13346), this protein is L-fucose mutarotase.